A 759-amino-acid chain; its full sequence is DNA topoisomerase 4 subunit A (759 aa).

The Topo IIA-type catalytic domain occupies 44–516 (LPDVRDGLKP…VFGEAPQVDA (473 aa)). The O-(5'-phospho-DNA)-tyrosine intermediate role is filled by tyrosine 132.

This sequence belongs to the type II topoisomerase GyrA/ParC subunit family. ParC type 1 subfamily. As to quaternary structure, heterotetramer composed of ParC and ParE.

It is found in the cell membrane. The catalysed reaction is ATP-dependent breakage, passage and rejoining of double-stranded DNA.. Topoisomerase IV is essential for chromosome segregation. It relaxes supercoiled DNA. Performs the decatenation events required during the replication of a circular DNA molecule. In Caulobacter vibrioides (strain ATCC 19089 / CIP 103742 / CB 15) (Caulobacter crescentus), this protein is DNA topoisomerase 4 subunit A.